Reading from the N-terminus, the 159-residue chain is Ribosome maturation factor RimP (159 aa).

Belongs to the RimP family.

It is found in the cytoplasm. Functionally, required for maturation of 30S ribosomal subunits. The sequence is that of Ribosome maturation factor RimP from Geotalea daltonii (strain DSM 22248 / JCM 15807 / FRC-32) (Geobacter daltonii).